The following is a 126-amino-acid chain: Small ribosomal subunit protein uS12c (126 aa).

The protein belongs to the universal ribosomal protein uS12 family. As to quaternary structure, part of the 30S ribosomal subunit.

The protein localises to the plastid. It is found in the chloroplast. Functionally, with S4 and S5 plays an important role in translational accuracy. Located at the interface of the 30S and 50S subunits. In Trieres chinensis (Marine centric diatom), this protein is Small ribosomal subunit protein uS12c (rps12).